A 573-amino-acid polypeptide reads, in one-letter code: Oxygen sensor histidine kinase response regulator DosT (573 aa).

GAF domains lie at 61-198 and 229-366; these read KLDA…GIAV and DPAM…ALAW. His147 is a binding site for heme. A Histidine kinase domain is found at 380–573; the sequence is ILTDRDRIAR…TLLRWSAPLR (194 aa). Residue His392 is modified to Phosphohistidine; by autocatalysis.

Requires Mg(2+) as cofactor. The cofactor is heme.

It localises to the cytoplasm. Its function is as follows. Interacts with the two-component regulatory system DevR/DevS (DosR/DosS) involved in onset of the dormancy response. Required for full induction of the DevR (DosR) regulon; required during early adaptation to anaerobiosis, to start induction of the DevR regulon. May act as a direct hypoxia/oxygen sensor. May be the secondary sensor for CO. Donates a phosphate group to DevR (DosR). The protein is Oxygen sensor histidine kinase response regulator DosT (dosT) of Mycobacterium tuberculosis (strain CDC 1551 / Oshkosh).